Reading from the N-terminus, the 173-residue chain is Transcriptional repressor NrdR (173 aa).

Residues 3 to 34 (CPYCGSLDTQVKDSRPTEDNTAIRRRRVCPDC) fold into a zinc finger. An ATP-cone domain is found at 49-139 (LMVVKRSGRR…VYRNFREARD (91 aa)).

The protein belongs to the NrdR family. Zn(2+) is required as a cofactor.

Its function is as follows. Negatively regulates transcription of bacterial ribonucleotide reductase nrd genes and operons by binding to NrdR-boxes. This Azorhizobium caulinodans (strain ATCC 43989 / DSM 5975 / JCM 20966 / LMG 6465 / NBRC 14845 / NCIMB 13405 / ORS 571) protein is Transcriptional repressor NrdR.